The following is a 418-amino-acid chain: AA14 family lytic polysaccharide monooxygenase B (418 aa).

An N-terminal signal peptide occupies residues 1–18; the sequence is MIPVFLAAVAAFLPLTSG. Residues N31, N94, and N151 are each glycosylated (N-linked (GlcNAc...) asparagine). Cystine bridges form between C85-C108, C127-C154, C171-C176, and C178-C200. Residues N201 and N235 are each glycosylated (N-linked (GlcNAc...) asparagine). A disulfide bridge links C220 with C236. The segment covering 307–343 has biased composition (low complexity); that stretch reads AAATPAPSSSGSSPSSSSPGSSSTASTTSTSGPRPSA. A disordered region spans residues 307-364; it reads AAATPAPSSSGSSPSSSSPGSSSTASTTSTSGPRPSARGFRRSTGERPPTGVPTPRKS.

It belongs to the polysaccharide monooxygenase AA14 family. Cu(2+) is required as a cofactor.

Its subcellular location is the secreted. In terms of biological role, lytic polysaccharide monooxygenase (LPMO) that oxidatively cleaves xylan with both C1 and C4 regioselectivity and that specifically targets the protective shield made by heteroxylans that cover cellulose microfibrils in wood. Catalysis by LPMOs requires the reduction of the active-site copper from Cu(II) to Cu(I) by a reducing agent and H(2)O(2) or O(2) as a cosubstrate. Cleavage occurs only when xylans are bound to cellulose and not when they are in solution. Increases the efficiency of wood saccharification through oxidative cleavage of highly refractory xylan-coated cellulose fibers via synergistic relationship with xylan-active enzymes, xylobiohydrolases and cellobiohydrolases. This is AA14 family lytic polysaccharide monooxygenase B from Trametes coccinea (strain BRFM310) (Pycnoporus coccineus).